A 111-amino-acid chain; its full sequence is Photosystem II reaction center Psb28 protein (111 aa).

This sequence belongs to the Psb28 family. In terms of assembly, part of the photosystem II complex.

It localises to the cellular thylakoid membrane. The sequence is that of Photosystem II reaction center Psb28 protein from Acaryochloris marina (strain MBIC 11017).